Consider the following 101-residue polypeptide: Small ribosomal subunit protein uS10 (101 aa).

The protein belongs to the universal ribosomal protein uS10 family. In terms of assembly, part of the 30S ribosomal subunit.

Functionally, involved in the binding of tRNA to the ribosomes. The polypeptide is Small ribosomal subunit protein uS10 (Brachyspira pilosicoli (Serpulina pilosicoli)).